A 154-amino-acid chain; its full sequence is 3-hydroxyacyl-[acyl-carrier-protein] dehydratase FabZ (154 aa).

H57 is a catalytic residue.

It belongs to the thioester dehydratase family. FabZ subfamily.

It localises to the cytoplasm. It carries out the reaction a (3R)-hydroxyacyl-[ACP] = a (2E)-enoyl-[ACP] + H2O. In terms of biological role, involved in unsaturated fatty acids biosynthesis. Catalyzes the dehydration of short chain beta-hydroxyacyl-ACPs and long chain saturated and unsaturated beta-hydroxyacyl-ACPs. The protein is 3-hydroxyacyl-[acyl-carrier-protein] dehydratase FabZ of Sinorhizobium medicae (strain WSM419) (Ensifer medicae).